The primary structure comprises 333 residues: Transcription factor MYB36 (333 aa).

2 consecutive HTH myb-type domains span residues 9 to 62 (KANV…LNYL) and 63 to 117 (RPNI…KKKL). DNA-binding regions (H-T-H motif) lie at residues 38–62 (WIAL…LNYL) and 90–113 (WSII…NTKL). The segment at 119 to 150 (GRQKQMNRQDSITDSTENNLSNNNNNKSPQNL) is disordered. Positions 122-135 (KQMNRQDSITDSTE) are enriched in polar residues. Positions 136-150 (NNLSNNNNNKSPQNL) are enriched in low complexity.

As to expression, expressed in leaves, roots (endodermis-specific) and seedlings.

The protein resides in the nucleus. Its function is as follows. Transcription factors that activates genes required for endodermal differentiation but represses genes involved in proliferative divisions, thus regulating the transition from proliferation to differentiation in root endodermis. Required for Casparian strip formation by positively regulating the expression of the Casparian strip genes CASP1, PER64 and ESB1 and other endodermis-specific genes, thus triggering correct localized lignin biosynthesis in root endodermis and subsequently regulating global ion homeostasis. The sequence is that of Transcription factor MYB36 from Arabidopsis thaliana (Mouse-ear cress).